The following is a 66-amino-acid chain: Large ribosomal subunit protein bL35 (66 aa).

Belongs to the bacterial ribosomal protein bL35 family. Part of the 50S ribosomal subunit. Contacts proteins L15 and L33.

Its function is as follows. Binds the 23S rRNA. The protein is Large ribosomal subunit protein bL35 (rpmI) of Deinococcus radiodurans (strain ATCC 13939 / DSM 20539 / JCM 16871 / CCUG 27074 / LMG 4051 / NBRC 15346 / NCIMB 9279 / VKM B-1422 / R1).